The chain runs to 488 residues: Multidrug resistance outer membrane protein MdtP (488 aa).

Positions 1 to 23 are cleaved as a signal peptide; it reads MINRQLSRLLLCSILGSTTLISG. C24 carries N-palmitoyl cysteine lipidation. C24 is lipidated: S-diacylglycerol cysteine.

It belongs to the outer membrane factor (OMF) (TC 1.B.17) family. As to quaternary structure, could be part of a tripartite efflux system composed of MdtN, MdtO and MdtP.

It is found in the cell outer membrane. Its function is as follows. Could be involved in resistance to puromycin, acriflavine and tetraphenylarsonium chloride. This is Multidrug resistance outer membrane protein MdtP (mdtP) from Shigella flexneri.